The sequence spans 224 residues: Protein-L-isoaspartate O-methyltransferase (224 aa).

S70 is a catalytic residue.

This sequence belongs to the methyltransferase superfamily. L-isoaspartyl/D-aspartyl protein methyltransferase family.

It is found in the cytoplasm. The catalysed reaction is [protein]-L-isoaspartate + S-adenosyl-L-methionine = [protein]-L-isoaspartate alpha-methyl ester + S-adenosyl-L-homocysteine. Functionally, catalyzes the methyl esterification of L-isoaspartyl residues in peptides and proteins that result from spontaneous decomposition of normal L-aspartyl and L-asparaginyl residues. It plays a role in the repair and/or degradation of damaged proteins. The chain is Protein-L-isoaspartate O-methyltransferase from Cellvibrio japonicus (strain Ueda107) (Pseudomonas fluorescens subsp. cellulosa).